A 159-amino-acid polypeptide reads, in one-letter code: Lipoprotein signal peptidase (159 aa).

Transmembrane regions (helical) follow at residues proline 59–phenylalanine 79 and phenylalanine 87–leucine 107. Catalysis depends on residues aspartate 113 and aspartate 139. The chain crosses the membrane as a helical span at residues leucine 131 to isoleucine 151.

Belongs to the peptidase A8 family.

The protein localises to the cell inner membrane. The enzyme catalyses Release of signal peptides from bacterial membrane prolipoproteins. Hydrolyzes -Xaa-Yaa-Zaa-|-(S,diacylglyceryl)Cys-, in which Xaa is hydrophobic (preferably Leu), and Yaa (Ala or Ser) and Zaa (Gly or Ala) have small, neutral side chains.. The protein operates within protein modification; lipoprotein biosynthesis (signal peptide cleavage). This protein specifically catalyzes the removal of signal peptides from prolipoproteins. The chain is Lipoprotein signal peptidase from Chlorobium phaeobacteroides (strain BS1).